Consider the following 817-residue polypeptide: Kinesin-like protein 2 (817 aa).

Positions 1–155 are disordered; it reads MEEEGHKSLT…YNDEKSVNAS (155 aa). Low complexity predominate over residues 8–23; it reads SLTSHLPQSSSSLSQS. The span at 39 to 60 shows a compositional bias: polar residues; sequence IKTNSSSSNILKPRLSLQNEVN. Positions 76–86 are enriched in low complexity; that stretch reads SLASVKSSSLA. Polar residues predominate over residues 106-116; it reads PISSRSVSASS. Low complexity predominate over residues 122–132; sequence ASAVSSSLNSS. Positions 155 to 242 form a coiled coil; sequence SALRTTEDRL…VSQKGMESLE (88 aa). 10 residues coordinate ATP: Asn-473, Arg-475, Arg-479, Glu-543, Gly-566, Ser-567, Gly-568, Lys-569, Thr-570, and Thr-778. Positions 473-807 constitute a Kinesin motor domain; the sequence is NIRVFCRVRP…LRFATKVNNT (335 aa).

The protein belongs to the TRAFAC class myosin-kinesin ATPase superfamily. Kinesin family. NCD subfamily.

It is found in the cytoplasm. Its subcellular location is the cytoskeleton. The protein localises to the spindle. The protein resides in the nucleus. The catalysed reaction is ATP + H2O = ADP + phosphate + H(+). The enzyme catalyses ATP + H2O + a kinesin associated with a microtubule at position (n) = ADP + phosphate + a kinesin associated with a microtubule at position (n-1, toward the minus end).. Its function is as follows. Minus end-directed microtubule (MT) motor that is involved in spindle microtubule shortening, kinetochore capture, and polarization of cytoplasmic microtubules. During mitosis, promotes spindle microtubule shortening by depolymerization. During metaphase, involved in the recapture of kinetochores displaced from the spindle and their transport towards the spindle pole body; promotes transport both by microtubule end-on pulling and by lateral sliding along the side of the microtubule. During interphase, required for the polarization of cytoplasmic microtubules where it orients the microtubule plus ends toward the cell ends and the minus ends toward the cell center. Required for karyogamy. This is Kinesin-like protein 2 from Schizosaccharomyces pombe (strain 972 / ATCC 24843) (Fission yeast).